A 396-amino-acid chain; its full sequence is Ribosomal RNA large subunit methyltransferase I (396 aa).

In terms of domain architecture, PUA spans 2 to 79 (AVRIKLKPGR…REEEIDREFF (78 aa)).

The protein belongs to the methyltransferase superfamily. RlmI family.

The protein resides in the cytoplasm. The enzyme catalyses cytidine(1962) in 23S rRNA + S-adenosyl-L-methionine = 5-methylcytidine(1962) in 23S rRNA + S-adenosyl-L-homocysteine + H(+). In terms of biological role, specifically methylates the cytosine at position 1962 (m5C1962) of 23S rRNA. The polypeptide is Ribosomal RNA large subunit methyltransferase I (Shewanella sp. (strain ANA-3)).